Here is an 84-residue protein sequence, read N- to C-terminus: Beta-defensin 119 (84 aa).

Positions 1–21 (MKFLFLFLAILLATKIPVISG) are cleaved as a signal peptide. 3 cysteine pairs are disulfide-bonded: cysteine 28-cysteine 55, cysteine 35-cysteine 49, and cysteine 39-cysteine 56.

This sequence belongs to the beta-defensin family.

The protein resides in the secreted. Has antibacterial activity. This is Beta-defensin 119 (DEFB119) from Macaca fascicularis (Crab-eating macaque).